The chain runs to 377 residues: Glutamate 5-kinase (377 aa).

Lys-21 contributes to the ATP binding site. Residues Ser-61, Asp-149, and Asn-161 each coordinate substrate. Residues 181 to 182 and 223 to 229 contribute to the ATP site; these read SD and SGGMTSK. Residues 286-363 enclose the PUA domain; it reads RGSVQVDAGA…REHEELLGYA (78 aa).

This sequence belongs to the glutamate 5-kinase family.

The protein localises to the cytoplasm. It catalyses the reaction L-glutamate + ATP = L-glutamyl 5-phosphate + ADP. It functions in the pathway amino-acid biosynthesis; L-proline biosynthesis; L-glutamate 5-semialdehyde from L-glutamate: step 1/2. Its function is as follows. Catalyzes the transfer of a phosphate group to glutamate to form L-glutamate 5-phosphate. The chain is Glutamate 5-kinase from Novosphingobium aromaticivorans (strain ATCC 700278 / DSM 12444 / CCUG 56034 / CIP 105152 / NBRC 16084 / F199).